The primary structure comprises 341 residues: MPYHSSTKSRAVSTWLLVVAALVCAMIIIGGTTRLTDSGLSITEWKPISGAIPPLSQQDWQDEFALYQQTTEFQVQNSAMTLDEFEFIFWWEWGHRQLGRLIGLVYFVPFVFFWMRGHLSARLKSRLFGLFLLGGAQGAIGWWMVASGLSDRLDVSQYRLATHLGMAFVILGLSIWFSLEARHGPPPLRRGRLAGVTAGLLGLVFVQIILGAFVAGLDAGRIYNTWPLMNGDLIPEGYLGGMNFFPAIFESHAAVQMHHRWTGYLVALGVFAYAWQVWREPRVSLKPFMVILPALVIGQIALGIAALLAVVPLSLSLAHQAGAILLFIAMVAAAWTARRAV.

The next 5 helical transmembrane spans lie at 11 to 31 (AVST…IIGG), 101 to 121 (LIGL…HLSA), 127 to 147 (LFGL…MVAS), 160 to 180 (LATH…FSLE), and 194 to 214 (AGVT…GAFV). His259 serves as a coordination point for heme. 3 consecutive transmembrane segments (helical) span residues 261–278 (WTGY…WQVW), 288–308 (FMVI…AALL), and 315–335 (LSLA…AAAW). Heme is bound at residue His319.

This sequence belongs to the COX15/CtaA family. Type 2 subfamily. Interacts with CtaB. The cofactor is heme b.

It is found in the cell membrane. The enzyme catalyses Fe(II)-heme o + 2 A + H2O = Fe(II)-heme a + 2 AH2. The protein operates within porphyrin-containing compound metabolism; heme A biosynthesis; heme A from heme O: step 1/1. In terms of biological role, catalyzes the conversion of heme O to heme A by two successive hydroxylations of the methyl group at C8. The first hydroxylation forms heme I, the second hydroxylation results in an unstable dihydroxymethyl group, which spontaneously dehydrates, resulting in the formyl group of heme A. The polypeptide is Heme A synthase (Maricaulis maris (strain MCS10) (Caulobacter maris)).